The following is a 178-amino-acid chain: Cytidylate kinase (178 aa).

An ATP-binding site is contributed by 7-15; sequence GLPGTGTTT.

Belongs to the cytidylate kinase family. Type 2 subfamily.

The protein localises to the cytoplasm. The catalysed reaction is CMP + ATP = CDP + ADP. The enzyme catalyses dCMP + ATP = dCDP + ADP. This chain is Cytidylate kinase, found in Methanococcus maripaludis (strain DSM 14266 / JCM 13030 / NBRC 101832 / S2 / LL).